The following is a 579-amino-acid chain: CTP synthase (579 aa).

The tract at residues 1–281 is amidoligase domain; the sequence is MPALRKHPQT…DAYVVRRLNL (281 aa). A CTP-binding site is contributed by Ser23. A UTP-binding site is contributed by Ser23. ATP is bound by residues 24–29 and Asp81; that span reads SLGKGL. Positions 81 and 155 each coordinate Mg(2+). CTP is bound by residues 162–164, 202–207, and Lys238; these read DIE and KTKPTQ. UTP-binding positions include 202–207 and Lys238; that span reads KTKPTQ. In terms of domain architecture, Glutamine amidotransferase type-1 spans 306-554; sequence RIALVGKYID…IGAALDYKAA (249 aa). Gly369 provides a ligand contact to L-glutamine. Cys396 acts as the Nucleophile; for glutamine hydrolysis in catalysis. Residues 397–400, Glu419, and Arg480 contribute to the L-glutamine site; that span reads LGLQ. Active-site residues include His527 and Glu529.

This sequence belongs to the CTP synthase family. Homotetramer.

The catalysed reaction is UTP + L-glutamine + ATP + H2O = CTP + L-glutamate + ADP + phosphate + 2 H(+). It catalyses the reaction L-glutamine + H2O = L-glutamate + NH4(+). It carries out the reaction UTP + NH4(+) + ATP = CTP + ADP + phosphate + 2 H(+). The protein operates within pyrimidine metabolism; CTP biosynthesis via de novo pathway; CTP from UDP: step 2/2. Allosterically activated by GTP, when glutamine is the substrate; GTP has no effect on the reaction when ammonia is the substrate. The allosteric effector GTP functions by stabilizing the protein conformation that binds the tetrahedral intermediate(s) formed during glutamine hydrolysis. Inhibited by the product CTP, via allosteric rather than competitive inhibition. In terms of biological role, catalyzes the ATP-dependent amination of UTP to CTP with either L-glutamine or ammonia as the source of nitrogen. Regulates intracellular CTP levels through interactions with the four ribonucleotide triphosphates. This Mycobacterium sp. (strain KMS) protein is CTP synthase.